We begin with the raw amino-acid sequence, 349 residues long: D-arabinose 1-dehydrogenase (NADP(+)) (349 aa).

Residues C46, H70, D99, C102, C105, C113, and D155 each contribute to the Zn(2+) site.

The protein belongs to the zinc-containing alcohol dehydrogenase family. Homotetramer. Dimer of dimers. Requires Zn(2+) as cofactor.

The catalysed reaction is D-arabinose + NADP(+) = D-arabinono-1,4-lactone + NADPH + H(+). Functionally, participates in a pentose oxidation pathway that converts D-arabinose to 2-oxoglutarate. Catalyzes the NADP-dependent conversion of D-arabinose to D-arabinono-1,4-lactone. In vitro, can also use L-fucose, L-galactose and D-ribose. Shows highest activity with L-fucose, in combinaison with NAD, and lower activity toward L-galactose and D-ribose. When acting on its physiological substrate, D-arabinose, shows a clear preference for NADP over NAD. The protein is D-arabinose 1-dehydrogenase (NADP(+)) of Saccharolobus solfataricus (strain ATCC 35092 / DSM 1617 / JCM 11322 / P2) (Sulfolobus solfataricus).